A 357-amino-acid chain; its full sequence is 3-dehydroquinate synthase (357 aa).

Residues 104-108 (GVVGD), 128-129 (TT), Lys-141, and 168-171 (FLET) contribute to the NAD(+) site. Zn(2+) is bound by residues Glu-183, His-243, and His-260.

This sequence belongs to the sugar phosphate cyclases superfamily. Dehydroquinate synthase family. Requires NAD(+) as cofactor. Co(2+) is required as a cofactor. It depends on Zn(2+) as a cofactor.

The protein localises to the cytoplasm. It catalyses the reaction 7-phospho-2-dehydro-3-deoxy-D-arabino-heptonate = 3-dehydroquinate + phosphate. The protein operates within metabolic intermediate biosynthesis; chorismate biosynthesis; chorismate from D-erythrose 4-phosphate and phosphoenolpyruvate: step 2/7. In terms of biological role, catalyzes the conversion of 3-deoxy-D-arabino-heptulosonate 7-phosphate (DAHP) to dehydroquinate (DHQ). This is 3-dehydroquinate synthase from Streptococcus pyogenes serotype M6 (strain ATCC BAA-946 / MGAS10394).